The following is a 155-amino-acid chain: Nuclear cap-binding protein subunit 2 (155 aa).

MRNA is bound by residues Tyr19, Tyr42, Arg111–Asp115, Arg122–Arg126, and Gln132–Val133. The region spanning Ala39 to Gly117 is the RRM domain. The segment at Gly121–Ser155 is disordered. Residues Val133 to Pro143 are compositionally biased toward basic and acidic residues.

This sequence belongs to the RRM NCBP2 family. In terms of assembly, component of the nuclear cap-binding complex (CBC), a heterodimer composed of ncbp1/cbp80 and ncbp2/cbp20 that interacts with m7GpppG-capped RNA.

It is found in the nucleus. Its subcellular location is the cytoplasm. Functionally, component of the cap-binding complex (CBC), which binds co-transcriptionally to the 5' cap of pre-mRNAs and is involved in various processes such as pre-mRNA splicing, translation regulation, nonsense-mediated mRNA decay, RNA-mediated gene silencing (RNAi) by microRNAs (miRNAs) and mRNA export. The CBC complex is involved in mRNA export from the nucleus, leading to the recruitment of the mRNA export machinery to the 5' end of mRNA and to mRNA export in a 5' to 3' direction through the nuclear pore. The CBC complex is also involved in mediating U snRNA and intronless mRNAs export from the nucleus. The CBC complex is essential for a pioneer round of mRNA translation, before steady state translation when the CBC complex is replaced by cytoplasmic cap-binding protein eIF4E. The pioneer round of mRNA translation mediated by the CBC complex plays a central role in nonsense-mediated mRNA decay (NMD), NMD only taking place in mRNAs bound to the CBC complex, but not on eIF4E-bound mRNAs. The CBC complex enhances NMD in mRNAs containing at least one exon-junction complex (EJC), promoting the interaction between upf1 and upf2. The CBC complex is also involved in 'failsafe' NMD, which is independent of the EJC complex, while it does not participate in Staufen-mediated mRNA decay (SMD). During cell proliferation, the CBC complex is also involved in microRNAs (miRNAs) biogenesis via its interaction with srrt/ars2, thereby being required for miRNA-mediated RNA interference. The CBC complex also acts as a negative regulator of parn, thereby acting as an inhibitor of mRNA deadenylation. In the CBC complex, ncbp2/cbp20 recognizes and binds capped RNAs (m7GpppG-capped RNA) but requires ncbp1/cbp80 to stabilize the movement of its N-terminal loop and lock the CBC into a high affinity cap-binding state with the cap structure. The conventional cap-binding complex with NCBP2 binds both small nuclear RNA (snRNA) and messenger (mRNA) and is involved in their export from the nucleus. In Danio rerio (Zebrafish), this protein is Nuclear cap-binding protein subunit 2 (ncbp2).